A 505-amino-acid polypeptide reads, in one-letter code: Neuronal acetylcholine receptor subunit alpha-3 (505 aa).

A signal peptide spans 1–31; it reads MGSGPLSLPLALSPPRLLLLLLLSLLPVARA. Residues 32–250 are Extracellular-facing; that stretch reads SEAEHRLFER…PLFYTINLII (219 aa). 2 N-linked (GlcNAc...) asparagine glycosylation sites follow: Asn55 and Asn172. Disulfide bonds link Cys159–Cys173 and Cys223–Cys224. Residues 251–266 form a helical membrane-spanning segment; it reads PCLLISFLTVLVFYLP. The Cytoplasmic segment spans residues 267–268; that stretch reads SD. A helical membrane pass occupies residues 269 to 285; that stretch reads CGEKVTLCISVLLSLTV. Residues 286–307 lie on the Extracellular side of the membrane; it reads FLLVITETIPSTSLVIPLIGEY. The helical transmembrane segment at 308–326 threads the bilayer; sequence LLFTMIFVTLSIVITVFVL. Residues 327 to 474 are Cytoplasmic-facing; the sequence is NVHYRTPTTH…QDDWKYVAMV (148 aa). A phosphoserine mark is found at Ser413 and Ser416. A helical membrane pass occupies residues 475–493; sequence IDRIFLWVFTLVCILGTAG. Topologically, residues 494–505 are extracellular; it reads LFLQPLMAREDA.

Belongs to the ligand-gated ion channel (TC 1.A.9) family. Acetylcholine receptor (TC 1.A.9.1) subfamily. Alpha-3/CHRNA3 sub-subfamily. In terms of assembly, neuronal AChR is composed of two different types of subunits: alpha and beta. CHRNA3/Alpha-3 subunit can be combined to CHRNA5/alpha-5, CHRNB2/beta-2 CHRNB3/beta-3 or CHRNB4/beta-4 to give rise to functional receptors. Forms stoichiometries such as (CHRNA3)2:(CHRNB4)3 or (CHRNA3:CHRNB4)2:CHRNB3. Part of a complex composed of STUB1/CHIP, VCP/p97, CHRNA3, and UBXN2A that modulates the ubiquitination and endoplasmic reticulum-associated degradation (ERAD) of CHRNA3. Within the complex UBXN2A acts as a scaffold protein required for the interaction of CHRNA3 with VCP/p97, this interaction also inhibits CHRNA3 ubiquitination by STUB1/CHIP and subsequently ERAD. Interacts with UBXN2A (via SEP domain), the interaction is required for the interaction of CHRNA3 in the STUB1:VCP:UBXN2A complex. Interacts with RIC3; which is required for proper folding and assembly. Interacts with LYPD6. Post-translationally, ubiquitinated; by STUB1/CHIP and thereafter degraded by the 26S proteosome complex.

The protein resides in the synaptic cell membrane. It localises to the cell membrane. Its subcellular location is the endoplasmic reticulum. It is found in the golgi apparatus. It catalyses the reaction Ca(2+)(in) = Ca(2+)(out). It carries out the reaction K(+)(in) = K(+)(out). The catalysed reaction is Na(+)(in) = Na(+)(out). Activated by a myriad of ligands such as acetylcholine, cytisine, nicotine, choline and epibatidine. The heteropentamer CHRNA3:CHRNB2 activity is blocked by alpha-conotoxins ImI, ImII, PnIA, GID and MII. The heteropentamer CHRNA3:CHRNB4 activity is blocked by the alpha-conotoxin ImI and AuIB. Functionally, component of neuronal acetylcholine receptors (nAChRs) that function as pentameric, ligand-gated cation channels with high calcium permeability among other activities. nAChRs are excitatory neurotrasnmitter receptors formed by a collection of nAChR subunits known to mediate synaptic transmission in the nervous system and the neuromuscular junction. Each nAchR subunit confers differential attributes to channel properties, including activation, deactivation and desensitization kinetics, pH sensitivity, cation permeability, and binding to allosteric modulators. CHRNA3 forms heteropentameric neuronal acetylcholine receptors with CHRNB2 and CHRNB4, with CHRNA5, and CHRNB3 as accesory subunits. CHRNA3:CHRNB4 being predominant in neurons of the autonomic ganglia, it is known as ganglionic nicotinic receptor. CHRNA3:CHRNB4 or CHRNA3:CHRNA5:CHRNB4 play also an important role in the habenulo-interpeduncular tract, modulating the mesolimbic dopamine system and affecting reward circuits and addiction. Hypothalamic CHRNA3:CHRNB4 nAChR activation by nicotine leads to activation of POMC neurons and a decrease in food intake. Also expressed in the urothelium where it modulates reflex bladder activity by increasing intracellular calcium through extracellular influx and basal ATP release. This is Neuronal acetylcholine receptor subunit alpha-3 from Homo sapiens (Human).